The sequence spans 321 residues: Cytochrome c biogenesis protein CcsA (321 aa).

8 helical membrane-spanning segments follow: residues 12–32 (HISF…LLVY), 45–62 (MIAT…RWIS), 71–91 (LYES…ILYI), 98–117 (LNAI…TSGL), 143–163 (MLLS…LIVI), 227–247 (VISL…VWAN), 260–277 (ETWA…LHTR), and 292–312 (VASI…LLGI).

The protein belongs to the CcmF/CycK/Ccl1/NrfE/CcsA family. In terms of assembly, may interact with Ccs1.

It is found in the plastid. Its subcellular location is the chloroplast thylakoid membrane. Its function is as follows. Required during biogenesis of c-type cytochromes (cytochrome c6 and cytochrome f) at the step of heme attachment. The sequence is that of Cytochrome c biogenesis protein CcsA from Phalaenopsis aphrodite subsp. formosana (Moth orchid).